The chain runs to 299 residues: Taste receptor type 2 member 50 (299 aa).

Position 1 (methionine 1) is a topological domain, extracellular. Residues 2-22 form a helical membrane-spanning segment; the sequence is IPFLHIFFSVLILVLFVLGNF. Residues 23 to 55 are Cytoplasmic-facing; that stretch reads ANGFIALVNFIDWVKRKKISLADQILTALAVSR. The chain crosses the membrane as a helical span at residues 56 to 76; it reads VGLLWALLLNWYLTELNPAFY. Over 77-87 the chain is Extracellular; the sequence is SVELRITSYNA. The chain crosses the membrane as a helical span at residues 88 to 108; it reads WVVTNHFSMWLAASLSIFYLL. Residues 109 to 126 are Cytoplasmic-facing; sequence KIANFSNLSFLNLKRRVR. A helical membrane pass occupies residues 127–147; the sequence is SIILVILLGSLLFLVCHLLAV. Over 148–181 the chain is Extracellular; it reads NMDENMWTEEYEGNMTGKMKLRNAAHLSYMTVTT. Residue asparagine 161 is glycosylated (N-linked (GlcNAc...) asparagine). A helical membrane pass occupies residues 182–202; it reads LWSFIPFMLSLISFLMLIFSL. The Cytoplasmic portion of the chain corresponds to 203–229; sequence CKHLKKMQLHGEGSRDPSTTVHIKALQ. Residues 230–250 form a helical membrane-spanning segment; that stretch reads TLISFLLLCAIFFLFLIISVW. The Extracellular segment spans residues 251 to 259; the sequence is SPRRLQNEP. The helical transmembrane segment at 260 to 280 threads the bilayer; it reads VFMVCKAVGNIYLSFDSFVLI. At 281–299 the chain is on the cytoplasmic side; that stretch reads WRTKKLKHIFLLILCQIRC.

The protein belongs to the G-protein coupled receptor T2R family.

The protein localises to the membrane. Receptor that may play a role in the perception of bitterness and is gustducin-linked. May play a role in sensing the chemical composition of the gastrointestinal content. The activity of this receptor may stimulate alpha gustducin, mediate PLC-beta-2 activation and lead to the gating of TRPM5. This Macaca mulatta (Rhesus macaque) protein is Taste receptor type 2 member 50 (TAS2R50).